A 1291-amino-acid chain; its full sequence is Tat-binding homolog 7 (1291 aa).

The tract at residues 1–345 (MPRSDGFSPR…HNRGERERGR (345 aa)) is disordered. The segment covering 64–82 (RYYEEEYHEAISSEEDERR) has biased composition (basic and acidic residues). Polar residues predominate over residues 88-99 (SSNSMTYRQQVM). Residues 226-257 (EEEEEGAEEDEQSGEKDPEEEEDDSSNAESSE) are compositionally biased toward acidic residues. Residues 298–311 (NRHHRNRNGSRRRR) show a composition bias toward basic residues. Residue 432-439 (GPPGTGKT) participates in ATP binding. Positions 914–1022 (ALQRQMRLFF…DAIDDLIECE (109 aa)) constitute a Bromo domain. Positions 1110 to 1194 (KSEEGTSTST…MKDASKDSTP (85 aa)) are disordered. The segment covering 1128–1142 (NKKKLLKKKKGQKKS) has biased composition (basic residues). Positions 1148–1164 (EEHDEDSTVEDAGEDTI) are enriched in acidic residues. Positions 1168-1190 (LEIKKNQETPNSEHDIEMKDASK) are enriched in basic and acidic residues.

The protein belongs to the AAA ATPase family.

Its function is as follows. Thought to form a complex that enhances transcription from repetitive DNA sequences by modulating chromatin structure. The polypeptide is Tat-binding homolog 7 (lex-1) (Caenorhabditis elegans).